Here is a 153-residue protein sequence, read N- to C-terminus: Protein SprT-like (153 aa).

Residues 7–145 (QTLVEKISIV…VCGKCHGRLS (139 aa)) form the SprT-like domain. His67 is a Zn(2+) binding site. The active site involves Glu68. Position 71 (His71) interacts with Zn(2+).

The protein belongs to the SprT family. It depends on Zn(2+) as a cofactor.

Its subcellular location is the cytoplasm. The sequence is that of Protein SprT-like from Enterococcus faecalis (strain ATCC 700802 / V583).